A 304-amino-acid chain; its full sequence is Oxygen-dependent coproporphyrinogen-III oxidase (304 aa).

Ser-93 contributes to the substrate binding site. A divalent metal cation is bound by residues His-97 and His-107. Residue His-107 is the Proton donor of the active site. A substrate-binding site is contributed by 109–111 (NVR). Residues His-146 and His-176 each coordinate a divalent metal cation. The important for dimerization stretch occupies residues 241–276 (YVEFNLVYDRGTLFGLQSGGRTESILMSLPPQVRWG). Residue 259–261 (GGR) participates in substrate binding.

It belongs to the aerobic coproporphyrinogen-III oxidase family. Homodimer. A divalent metal cation is required as a cofactor.

Its subcellular location is the cytoplasm. The catalysed reaction is coproporphyrinogen III + O2 + 2 H(+) = protoporphyrinogen IX + 2 CO2 + 2 H2O. Its pathway is porphyrin-containing compound metabolism; protoporphyrin-IX biosynthesis; protoporphyrinogen-IX from coproporphyrinogen-III (O2 route): step 1/1. Functionally, involved in the heme biosynthesis. Catalyzes the aerobic oxidative decarboxylation of propionate groups of rings A and B of coproporphyrinogen-III to yield the vinyl groups in protoporphyrinogen-IX. The chain is Oxygen-dependent coproporphyrinogen-III oxidase from Pseudomonas savastanoi pv. phaseolicola (strain 1448A / Race 6) (Pseudomonas syringae pv. phaseolicola (strain 1448A / Race 6)).